A 223-amino-acid chain; its full sequence is Endonuclease V (223 aa).

Mg(2+) is bound by residues D35 and D103.

The protein belongs to the endonuclease V family. Mg(2+) is required as a cofactor.

The protein localises to the cytoplasm. The enzyme catalyses Endonucleolytic cleavage at apurinic or apyrimidinic sites to products with a 5'-phosphate.. Functionally, DNA repair enzyme involved in the repair of deaminated bases. Selectively cleaves double-stranded DNA at the second phosphodiester bond 3' to a deoxyinosine leaving behind the intact lesion on the nicked DNA. The chain is Endonuclease V from Salmonella enteritidis PT4 (strain P125109).